The following is a 138-amino-acid chain: Acidic phospholipase A2 pgPLA 1b/pgPLA 2b (138 aa).

The first 16 residues, 1-16, serve as a signal peptide directing secretion; sequence MRTLWIMAVLLVGVKG. 7 cysteine pairs are disulfide-bonded: Cys42–Cys131, Cys44–Cys60, Cys59–Cys111, Cys65–Cys138, Cys66–Cys104, Cys73–Cys97, and Cys91–Cys102. Ca(2+) contacts are provided by Tyr43, Gly45, and Gly47. Residue His63 is part of the active site. Asp64 is a Ca(2+) binding site. Asp105 is a catalytic residue.

This sequence belongs to the phospholipase A2 family. Group II subfamily. D49 sub-subfamily. Ca(2+) is required as a cofactor. As to expression, expressed by the venom gland.

The protein resides in the secreted. The enzyme catalyses a 1,2-diacyl-sn-glycero-3-phosphocholine + H2O = a 1-acyl-sn-glycero-3-phosphocholine + a fatty acid + H(+). Its function is as follows. PLA2 catalyzes the calcium-dependent hydrolysis of the 2-acyl groups in 3-sn-phosphoglycerides. This chain is Acidic phospholipase A2 pgPLA 1b/pgPLA 2b, found in Protobothrops flavoviridis (Habu).